The chain runs to 352 residues: Major capsid protein (352 aa).

The protein resides in the virion. Assembles to form a prolate capsid of about 145 nm x 44 nm. The sequence is that of Major capsid protein from Escherichia coli (Escherichia coli phage phi32).